We begin with the raw amino-acid sequence, 189 residues long: Large ribosomal subunit protein bL9 (189 aa).

Belongs to the bacterial ribosomal protein bL9 family.

Functionally, binds to the 23S rRNA. The chain is Large ribosomal subunit protein bL9 from Methylobacterium nodulans (strain LMG 21967 / CNCM I-2342 / ORS 2060).